Here is a 172-residue protein sequence, read N- to C-terminus: MVDKRESYTKEDLIASGRSELFGAGGPPLPSGNMLMMDRVVKMTEDGGKYDKGFVEAELDINPDLWFFSCHFIGDPVMPGCLGLDAMWQLVGFYLGWLGGEGKGRALGVGEVKFSGQVLPTAKKVSYRIHFKRVINRKLVMGVADGEVLVDGEVIYTASDLKVGLFKDTAAF.

The active site involves His71.

This sequence belongs to the thioester dehydratase family. FabA subfamily. As to quaternary structure, homodimer.

Its subcellular location is the cytoplasm. The enzyme catalyses a (3R)-hydroxyacyl-[ACP] = a (2E)-enoyl-[ACP] + H2O. It catalyses the reaction (3R)-hydroxydecanoyl-[ACP] = (2E)-decenoyl-[ACP] + H2O. It carries out the reaction (2E)-decenoyl-[ACP] = (3Z)-decenoyl-[ACP]. It functions in the pathway lipid metabolism; fatty acid biosynthesis. Necessary for the introduction of cis unsaturation into fatty acids. Catalyzes the dehydration of (3R)-3-hydroxydecanoyl-ACP to E-(2)-decenoyl-ACP and then its isomerization to Z-(3)-decenoyl-ACP. Can catalyze the dehydratase reaction for beta-hydroxyacyl-ACPs with saturated chain lengths up to 16:0, being most active on intermediate chain length. In Erwinia tasmaniensis (strain DSM 17950 / CFBP 7177 / CIP 109463 / NCPPB 4357 / Et1/99), this protein is 3-hydroxydecanoyl-[acyl-carrier-protein] dehydratase.